Consider the following 370-residue polypeptide: Selenide, water dikinase 2 (370 aa).

Sec-24 is an active-site residue. Position 24 (Sec-24) is a non-standard amino acid, selenocysteine. Residues Lys-27, 55–57 (GMD), Asp-76, and Asp-99 contribute to the ATP site. Asp-57 is a Mg(2+) binding site. Asp-99 and Asp-258 together coordinate Mg(2+).

It belongs to the selenophosphate synthase 1 family. Class I subfamily. As to quaternary structure, homodimer. The cofactor is Mg(2+). In terms of tissue distribution, first expressed in the midgut anlagen with subsequent expression in a variety of tissues including the gut and nervous system.

The enzyme catalyses hydrogenselenide + ATP + H2O = selenophosphate + AMP + phosphate + 2 H(+). Functionally, synthesizes selenophosphate from selenide and ATP. This Drosophila melanogaster (Fruit fly) protein is Selenide, water dikinase 2 (Sps2).